The chain runs to 113 residues: Holo-[acyl-carrier-protein] synthase (113 aa).

Residues Asp8 and Glu57 each coordinate Mg(2+).

It belongs to the P-Pant transferase superfamily. AcpS family. The cofactor is Mg(2+).

The protein localises to the cytoplasm. It carries out the reaction apo-[ACP] + CoA = holo-[ACP] + adenosine 3',5'-bisphosphate + H(+). Transfers the 4'-phosphopantetheine moiety from coenzyme A to a Ser of acyl-carrier-protein. This Thermodesulfovibrio yellowstonii (strain ATCC 51303 / DSM 11347 / YP87) protein is Holo-[acyl-carrier-protein] synthase.